Reading from the N-terminus, the 599-residue chain is MTPDELNIILPTLPEKPGCYQYFDEDGKVIYVGKAKNLRRRVSSYFYKEHADRKTRILVRQIRSIKYIVVDSEGDALLLENSLIKEYQPRYNVLLKDGKTYPSIVIKREPFPRIFATRDIKKDGSEYFGPYPGALIAKGMLRLVKEIYPIRTCKLDLREEKIRQGRYRVCLQYHIKKCKGPCIGNQTSNEYESNVSEIRDLLRGNLHRLVRMYRDRMQVYSEGLRFEEAQICKERIELLERYEAKHTVVPRNIDNVDVFSYDEDEHTAYINYMHIEHGGINRVYTLEYRKQIEESKEELLAAAITELRQRFESNAHEIVLPFDTGWQTGESITTTIPRRGDKRKLLELSEKNVAQYKLDKLKRAEKLNPEQRALHIVHGIQKDLHLDRPPKHIECFDNSNIQGTSPVAACVVFKMGKPSKKDYRKFHVKTVEGPNDFASMREIISRHYTRLTEENLPLPDLIVVDGGKGQLSAAYETLDKLGLIGKIPIIGLAERLEEIFFPKDPVPLILDKKSETLKVIQHLRDEAHRFGIGFHRDVRSKKQIQSELDNIKGIGKKTKEDLLRHFKSVKRIRSAEEEELSALIGRNKAKLLYEGLRKK.

The GIY-YIG domain maps to 15–93 (EKPGCYQYFD…IKEYQPRYNV (79 aa)). Positions 207–242 (HRLVRMYRDRMQVYSEGLRFEEAQICKERIELLERY) constitute a UVR domain.

It belongs to the UvrC family. As to quaternary structure, interacts with UvrB in an incision complex.

It localises to the cytoplasm. Its function is as follows. The UvrABC repair system catalyzes the recognition and processing of DNA lesions. UvrC both incises the 5' and 3' sides of the lesion. The N-terminal half is responsible for the 3' incision and the C-terminal half is responsible for the 5' incision. This is UvrABC system protein C from Porphyromonas gingivalis (strain ATCC BAA-308 / W83).